Reading from the N-terminus, the 95-residue chain is Acylphosphatase (95 aa).

One can recognise an Acylphosphatase-like domain in the interval 5–93 (RAHLFIRGKV…GEFQDFRILP (89 aa)). Residues R20 and N38 contribute to the active site.

The protein belongs to the acylphosphatase family.

The catalysed reaction is an acyl phosphate + H2O = a carboxylate + phosphate + H(+). This Pyrobaculum arsenaticum (strain DSM 13514 / JCM 11321 / PZ6) protein is Acylphosphatase (acyP).